The chain runs to 318 residues: Transaldolase (318 aa).

K132 (schiff-base intermediate with substrate) is an active-site residue.

The protein belongs to the transaldolase family. Type 1 subfamily. As to quaternary structure, homodimer.

Its subcellular location is the cytoplasm. The enzyme catalyses D-sedoheptulose 7-phosphate + D-glyceraldehyde 3-phosphate = D-erythrose 4-phosphate + beta-D-fructose 6-phosphate. It participates in carbohydrate degradation; pentose phosphate pathway; D-glyceraldehyde 3-phosphate and beta-D-fructose 6-phosphate from D-ribose 5-phosphate and D-xylulose 5-phosphate (non-oxidative stage): step 2/3. Functionally, transaldolase is important for the balance of metabolites in the pentose-phosphate pathway. In Shewanella baltica (strain OS185), this protein is Transaldolase.